Reading from the N-terminus, the 521-residue chain is Potassium/proton antiporter CemA (521 aa).

A run of 5 helical transmembrane segments spans residues 68 to 88, 294 to 314, 399 to 419, 446 to 466, and 481 to 501; these read FVFIIYWSVLECKTSIYLLNI, ALASLQYLGCLILIPWGISFP, ILHLLTDIIYFAIPSASFISG, ILLLTDSCIGFHSPHGWEILI, and IISCFVSTFPVISDTVFKYWI.

This sequence belongs to the CemA family.

The protein resides in the plastid. The protein localises to the chloroplast inner membrane. The enzyme catalyses K(+)(in) + H(+)(out) = K(+)(out) + H(+)(in). Its function is as follows. Contributes to K(+)/H(+) antiport activity by supporting proton efflux to control proton extrusion and homeostasis in chloroplasts in a light-dependent manner to modulate photosynthesis. Prevents excessive induction of non-photochemical quenching (NPQ) under continuous-light conditions. Indirectly promotes efficient inorganic carbon uptake into chloroplasts. This Huperzia lucidula (Shining clubmoss) protein is Potassium/proton antiporter CemA.